The primary structure comprises 547 residues: Chaperonin GroEL 1 (547 aa).

ATP-binding positions include 30–33 (TLGP), Lys-51, 87–91 (DGTTT), Gly-415, and Asp-496.

It belongs to the chaperonin (HSP60) family. As to quaternary structure, forms a cylinder of 14 subunits composed of two heptameric rings stacked back-to-back. Interacts with the co-chaperonin GroES.

Its subcellular location is the cytoplasm. It catalyses the reaction ATP + H2O + a folded polypeptide = ADP + phosphate + an unfolded polypeptide.. In terms of biological role, together with its co-chaperonin GroES, plays an essential role in assisting protein folding. The GroEL-GroES system forms a nano-cage that allows encapsulation of the non-native substrate proteins and provides a physical environment optimized to promote and accelerate protein folding. The polypeptide is Chaperonin GroEL 1 (Bradyrhizobium sp. (strain BTAi1 / ATCC BAA-1182)).